A 345-amino-acid polypeptide reads, in one-letter code: Short-wave-sensitive opsin 1 (345 aa).

The Extracellular portion of the chain corresponds to 1–30; it reads MSEEEFYLFKNISSVGPWDGPQYHIAPVWA. Asn-11 is a glycosylation site (N-linked (GlcNAc...) asparagine). A helical membrane pass occupies residues 31-55; sequence FYLQAAFMGTVFLIGFPLNAMVLVA. The Cytoplasmic portion of the chain corresponds to 56 to 67; the sequence is TLRYKKLRQPLN. The chain crosses the membrane as a helical span at residues 68-93; sequence YILVNVSFGGFLLCIFSVFPVFVASC. The Extracellular portion of the chain corresponds to 94-107; sequence NGYFVFGRHVCALE. Residues Cys-104 and Cys-181 are joined by a disulfide bond. A helical transmembrane segment spans residues 108-127; that stretch reads GFLGTVAGLVTGWSLAFLAF. Residues 128–146 are Cytoplasmic-facing; sequence ERYIVICKPFGNFRFSSKH. The helical transmembrane segment at 147–170 threads the bilayer; that stretch reads ALTVVLATWTIGIGVSIPPFFGWS. Over 171 to 196 the chain is Extracellular; that stretch reads RFIPEGLQCSCGPDWYTVGTKYRSES. Residues 197–224 form a helical membrane-spanning segment; the sequence is YTWFLFIFCFIVPLSLICFSYTQLLRAL. Over 225-246 the chain is Cytoplasmic; sequence KAVAAQQQESATTQKAEREVSR. Residues 247–270 form a helical membrane-spanning segment; it reads MVVVMVGSFCVCYVPYAAFAMYMV. The Extracellular portion of the chain corresponds to 271 to 278; it reads NNRNHGLD. A helical membrane pass occupies residues 279 to 303; sequence LRLVTIPSFFSKSACIYNPIIYCFM. Position 290 is an N6-(retinylidene)lysine (Lys-290). Residues 304-345 are Cytoplasmic-facing; sequence NKQFQACIMKMVCGKAMTDESDTCSSQKTEVSTVSSTQVGPN.

The protein belongs to the G-protein coupled receptor 1 family. Opsin subfamily. Phosphorylated on some or all of the serine and threonine residues present in the C-terminal region. As to expression, the three color pigments are found in the cone photoreceptor cells. Expressed throughout the epidermis and dermis, primarily in the stratum granulosum in the facial and abdominal skin (at protein level). Expressed in dermal fibroblasts (at protein level). Expressed in melanocytes (at protein level).

Its subcellular location is the cell membrane. The protein localises to the photoreceptor inner segment. The protein resides in the cell projection. It is found in the cilium. It localises to the photoreceptor outer segment. Its subcellular location is the cytoplasm. The protein localises to the perinuclear region. In terms of biological role, visual pigments are the light-absorbing molecules that mediate vision. They consist of an apoprotein, opsin, covalently linked to cis-retinal. Required for the maintenance of cone outer segment organization in the ventral retina, but not essential for the maintenance of functioning cone photoreceptors. Involved in ensuring correct abundance and localization of retinal membrane proteins. May increase spectral sensitivity in dim light. This chain is Short-wave-sensitive opsin 1 (OPN1SW), found in Homo sapiens (Human).